A 698-amino-acid polypeptide reads, in one-letter code: MRPVTDLQRRVFPFEVISDFTPSGDQPDAIAQLTARLQAGEKDIVLLGATGTGKSATTAWLIEQVQRPTLVMAPNKTLAAQLATEFRELLPNNAVEYFVSYYDYYQPEAYVPSSDTYIEKDSSINDEVERLRHSATNSLLTRRDVVVVASVSCIYGLGTPQEYVDRMVRLRVGMQIERDDLLRQFVGMQYTRNDLSFQRGTFRVRGDTVEIIPVYEELALRIEFFGDEVEAIHTLHPLTGDVVRAEEEMYLFPATHYVAGPERMERAIAGIEVELEDRLAELEGGGRLLEAQRLRMRTTYDIEMMRQIGTCSGIENYSRHIDGREPGSPPHTLLDYFPEDFMLVIDESHQTVPQIGAMYEGDSSRKRTLVEHGFRLPSAMDNRPLRWEEFLERIGQTVYLSATPGPYELGQSDGVVEQVIRPTGLVDPEIVVKPTKGQIDDLLAEINARAERDERVLVTTLTKKMSEDLTDYLLERGVRVRYLHSEVDTLRRVELLRELRTGVFDVLVGINLLREGLDLPEVSLVAILDADKEGFLRSGTSLIQTIGRAARNVSGQVHMYADSVTPSMALAIEETNRRREKQVAYNTERGIDPEPLRKRIGDITELLAREDIDTKELLAGGYRQAGSKAPVPRKAGGDGSMRERLAGAATADLAELIQELTDQMHVAAGELQFEVAARLRDEISDLKKELRQMSAASA.

Positions 35-210 (ARLQAGEKDI…TFRVRGDTVE (176 aa)) constitute a Helicase ATP-binding domain. Residue 48–55 (GATGTGKS) coordinates ATP. Positions 101–124 (YYDYYQPEAYVPSSDTYIEKDSSI) match the Beta-hairpin motif. Residues 438-604 (QIDDLLAEIN…PLRKRIGDIT (167 aa)) enclose the Helicase C-terminal domain. Residues 654-689 (AELIQELTDQMHVAAGELQFEVAARLRDEISDLKKE) form the UVR domain.

It belongs to the UvrB family. Forms a heterotetramer with UvrA during the search for lesions. Interacts with UvrC in an incision complex.

It is found in the cytoplasm. The UvrABC repair system catalyzes the recognition and processing of DNA lesions. A damage recognition complex composed of 2 UvrA and 2 UvrB subunits scans DNA for abnormalities. Upon binding of the UvrA(2)B(2) complex to a putative damaged site, the DNA wraps around one UvrB monomer. DNA wrap is dependent on ATP binding by UvrB and probably causes local melting of the DNA helix, facilitating insertion of UvrB beta-hairpin between the DNA strands. Then UvrB probes one DNA strand for the presence of a lesion. If a lesion is found the UvrA subunits dissociate and the UvrB-DNA preincision complex is formed. This complex is subsequently bound by UvrC and the second UvrB is released. If no lesion is found, the DNA wraps around the other UvrB subunit that will check the other stand for damage. This chain is UvrABC system protein B, found in Beutenbergia cavernae (strain ATCC BAA-8 / DSM 12333 / CCUG 43141 / JCM 11478 / NBRC 16432 / NCIMB 13614 / HKI 0122).